Consider the following 341-residue polypeptide: Anthranilate phosphoribosyltransferase (341 aa).

Residues G79, 82-83 (GD), T87, 89-92 (NIST), 107-115 (KHGNRAASS), and S119 each bind 5-phospho-alpha-D-ribose 1-diphosphate. G79 provides a ligand contact to anthranilate. Position 91 (S91) interacts with Mg(2+). Anthranilate is bound at residue N110. Residue R165 coordinates anthranilate. Residues D224 and E225 each contribute to the Mg(2+) site.

This sequence belongs to the anthranilate phosphoribosyltransferase family. Homodimer. Mg(2+) serves as cofactor.

The enzyme catalyses N-(5-phospho-beta-D-ribosyl)anthranilate + diphosphate = 5-phospho-alpha-D-ribose 1-diphosphate + anthranilate. It functions in the pathway amino-acid biosynthesis; L-tryptophan biosynthesis; L-tryptophan from chorismate: step 2/5. In terms of biological role, catalyzes the transfer of the phosphoribosyl group of 5-phosphorylribose-1-pyrophosphate (PRPP) to anthranilate to yield N-(5'-phosphoribosyl)-anthranilate (PRA). The sequence is that of Anthranilate phosphoribosyltransferase from Dehalococcoides mccartyi (strain ATCC BAA-2266 / KCTC 15142 / 195) (Dehalococcoides ethenogenes (strain 195)).